We begin with the raw amino-acid sequence, 360 residues long: Glutamine synthetase (360 aa).

The 80-residue stretch at 26-105 (IMAEYIWIDA…VLSECWNADG (80 aa)) folds into the GS beta-grasp domain. A GS catalytic domain is found at 112 to 360 (YRHECAKLME…METIYGSVDN (249 aa)).

It belongs to the glutamine synthetase family. As to quaternary structure, homooctamer.

It is found in the cytoplasm. It carries out the reaction L-glutamate + NH4(+) + ATP = L-glutamine + ADP + phosphate + H(+). The protein is Glutamine synthetase (GLN1) of Colletotrichum gloeosporioides (Anthracnose fungus).